Consider the following 305-residue polypeptide: UDP-3-O-acyl-N-acetylglucosamine deacetylase (305 aa).

Zn(2+)-binding residues include His-79, His-238, and Asp-242. His-265 functions as the Proton donor in the catalytic mechanism.

The protein belongs to the LpxC family. Zn(2+) is required as a cofactor.

The enzyme catalyses a UDP-3-O-[(3R)-3-hydroxyacyl]-N-acetyl-alpha-D-glucosamine + H2O = a UDP-3-O-[(3R)-3-hydroxyacyl]-alpha-D-glucosamine + acetate. It functions in the pathway glycolipid biosynthesis; lipid IV(A) biosynthesis; lipid IV(A) from (3R)-3-hydroxytetradecanoyl-[acyl-carrier-protein] and UDP-N-acetyl-alpha-D-glucosamine: step 2/6. Catalyzes the hydrolysis of UDP-3-O-myristoyl-N-acetylglucosamine to form UDP-3-O-myristoylglucosamine and acetate, the committed step in lipid A biosynthesis. This chain is UDP-3-O-acyl-N-acetylglucosamine deacetylase, found in Klebsiella pneumoniae subsp. pneumoniae (strain ATCC 700721 / MGH 78578).